A 337-amino-acid chain; its full sequence is uncharacterized protein (337 aa).

The segment covering 1–11 (MSEIEEEEEEG) has biased composition (acidic residues). Positions 1–20 (MSEIEEEEEEGSASAITGSR) are disordered. S2 carries the N-acetylserine modification. Residues 50–130 (ALSTRVSALE…LQRDVSKLEG (81 aa)) are a coiled coil. The interval 139-242 (LQDDDQNAGT…PISPRRHSVS (104 aa)) is disordered. Low complexity predominate over residues 170-182 (SSIQSQQASEAIE). Over residues 197–211 (LSASLPLVSQTTTPR) the composition is skewed to polar residues. T213 bears the Phosphothreonine mark. S217 is subject to Phosphoserine. A compositionally biased stretch (polar residues) spans 223 to 233 (ASGTPKTTSRP). A Phosphothreonine modification is found at T226. The residue at position 235 (S235) is a Phosphoserine.

This is an uncharacterized protein from Arabidopsis thaliana (Mouse-ear cress).